Here is a 158-residue protein sequence, read N- to C-terminus: UPAR/Ly6 domain-containing protein crim (158 aa).

The N-terminal stretch at 1-22 (MHYHTNLIAALLLAALIHEGSA) is a signal peptide. At 23–136 (IWCYRCTSAT…FCFLDHRCNG (114 aa)) the chain is on the extracellular side. N-linked (GlcNAc...) asparagine glycosylation is present at Asn107. Asn135 is lipidated: GPI-anchor amidated asparagine. The propeptide at 136-158 (GASGLQTSAVIGLLTLIPALLLR) is removed in mature form. Residues 137–157 (ASGLQTSAVIGLLTLIPALLL) traverse the membrane as a helical segment. Residue Arg158 is a topological domain, cytoplasmic.

This sequence belongs to the quiver family.

The protein resides in the membrane. Its function is as follows. Required for septate junction assembly possibly by organizing the preassembly and transport of septate junction proteins. Involved in epithelial cell septate junction-mediated paracellular barrier functions of trachea, hindgut and salivary gland. This chain is UPAR/Ly6 domain-containing protein crim, found in Drosophila melanogaster (Fruit fly).